The chain runs to 182 residues: Small ribosomal subunit protein uS4c (182 aa).

Positions Leu8 to Gln36 are disordered. The S4 RNA-binding domain maps to Met82 to Asn143.

This sequence belongs to the universal ribosomal protein uS4 family. In terms of assembly, part of the 30S ribosomal subunit. Contacts protein S5. The interaction surface between S4 and S5 is involved in control of translational fidelity.

The protein localises to the plastid. It is found in the chloroplast. In terms of biological role, one of the primary rRNA binding proteins, it binds directly to 16S rRNA where it nucleates assembly of the body of the 30S subunit. Functionally, with S5 and S12 plays an important role in translational accuracy. The protein is Small ribosomal subunit protein uS4c (rps4) of Dietes robinsoniana (Lord Howe wedding lily).